The sequence spans 247 residues: Probable transcriptional regulatory protein Swit_2142 (247 aa).

Residues 1 to 14 (MAGHSKFKNIMHRK) are compositionally biased toward basic residues. The disordered stretch occupies residues 1 to 21 (MAGHSKFKNIMHRKGAQDKKR).

Belongs to the TACO1 family.

The protein localises to the cytoplasm. The polypeptide is Probable transcriptional regulatory protein Swit_2142 (Rhizorhabdus wittichii (strain DSM 6014 / CCUG 31198 / JCM 15750 / NBRC 105917 / EY 4224 / RW1) (Sphingomonas wittichii)).